The following is a 715-amino-acid chain: SANT and BTB domain regulator of class switch recombination (715 aa).

One can recognise an SANT domain in the interval 21–59 (DMILCSLVGVPQPISWDSVARLVPGYTPKECAKRFEELK). The BTB domain maps to 146–254 (MVIHVCDEAK…ECIRYCHKNM (109 aa)). The segment covering 552–573 (SEEEDYTTGSEVTEDEVGDEEE) has biased composition (acidic residues). 2 disordered regions span residues 552-623 (SEEE…VSLQ) and 689-715 (SAHS…GRPT). Residues 578-605 (QAGRKVKPKRSAKQTKKHISSPSIHKKE) show a composition bias toward basic residues. Polar residues-rich tracts occupy residues 614 to 623 (DSSPFTVSLQ) and 690 to 699 (AHSNTRQMNT).

This sequence belongs to the KIAA1841 family. Homodimer.

Its function is as follows. Negatively regulates class switch recombination or isotype switching in splenic B-cells. The polypeptide is SANT and BTB domain regulator of class switch recombination (Xenopus laevis (African clawed frog)).